Reading from the N-terminus, the 244-residue chain is Krueppel-like factor 9 (244 aa).

A disordered region spans residues 80 to 142 (SVCSDSLESP…AKGKHASEKR (63 aa)). The residue at position 122 (serine 122) is a Phosphoserine. C2H2-type zinc fingers lie at residues 143 to 167 (HKCP…YRVH), 173 to 197 (FPCT…YRTH), and 203 to 225 (FRCP…ARRH).

The protein belongs to the Sp1 C2H2-type zinc-finger protein family. As to quaternary structure, interacts with ZZEF1. As to expression, epidermis (at protein level).

The protein resides in the nucleus. Its function is as follows. Transcription factor that binds to GC box promoter elements. Selectively activates mRNA synthesis from genes containing tandem repeats of GC boxes but represses genes with a single GC box. Acts as an epidermal circadian transcription factor regulating keratinocyte proliferation. In Homo sapiens (Human), this protein is Krueppel-like factor 9 (KLF9).